Consider the following 160-residue polypeptide: Cytochrome b6-f complex subunit 4 (160 aa).

Transmembrane regions (helical) follow at residues 36–56 (LLYI…GLAV), 95–115 (LLGI…PFIE), and 131–151 (VVFL…CLPI).

The protein belongs to the cytochrome b family. PetD subfamily. In terms of assembly, the 4 large subunits of the cytochrome b6-f complex are cytochrome b6, subunit IV (17 kDa polypeptide, PetD), cytochrome f and the Rieske protein, while the 4 small subunits are PetG, PetL, PetM and PetN. The complex functions as a dimer.

The protein resides in the cellular thylakoid membrane. Its function is as follows. Component of the cytochrome b6-f complex, which mediates electron transfer between photosystem II (PSII) and photosystem I (PSI), cyclic electron flow around PSI, and state transitions. The protein is Cytochrome b6-f complex subunit 4 of Prochlorococcus marinus (strain MIT 9515).